The following is a 267-amino-acid chain: 4-hydroxy-tetrahydrodipicolinate reductase (267 aa).

Residues 9–14 and D35 contribute to the NAD(+) site; that span reads GVSGRM. R36 provides a ligand contact to NADP(+). Residues 98 to 100 and 122 to 125 contribute to the NAD(+) site; these read GTT and APNM. The active-site Proton donor/acceptor is the H155. H156 serves as a coordination point for (S)-2,3,4,5-tetrahydrodipicolinate. Catalysis depends on K159, which acts as the Proton donor. Residue 165–166 coordinates (S)-2,3,4,5-tetrahydrodipicolinate; the sequence is GT.

It belongs to the DapB family.

It is found in the cytoplasm. The catalysed reaction is (S)-2,3,4,5-tetrahydrodipicolinate + NAD(+) + H2O = (2S,4S)-4-hydroxy-2,3,4,5-tetrahydrodipicolinate + NADH + H(+). The enzyme catalyses (S)-2,3,4,5-tetrahydrodipicolinate + NADP(+) + H2O = (2S,4S)-4-hydroxy-2,3,4,5-tetrahydrodipicolinate + NADPH + H(+). The protein operates within amino-acid biosynthesis; L-lysine biosynthesis via DAP pathway; (S)-tetrahydrodipicolinate from L-aspartate: step 4/4. In terms of biological role, catalyzes the conversion of 4-hydroxy-tetrahydrodipicolinate (HTPA) to tetrahydrodipicolinate. This Thiobacillus denitrificans (strain ATCC 25259 / T1) protein is 4-hydroxy-tetrahydrodipicolinate reductase.